The following is a 103-amino-acid chain: Carboxysome shell protein CsoS1 (103 aa).

In terms of domain architecture, BMC spans 9–94; the sequence is ALGMIETRGL…PHREVEPALG (86 aa).

The protein belongs to the bacterial microcompartments protein family. CsoS1 subfamily. Homohexamer with a small central pore. Forms a CsoS2-CsoS1-RuBisCO complex.

Its subcellular location is the carboxysome. Its function is as follows. One of the shell proteins of the carboxysome, a polyhedral inclusion where RuBisCO (ribulose bisphosphate carboxylase, ccbL-ccbS) is sequestered. Assembles into hexamers which make sheets that form the facets of the polyhedral carboxysome. This is Carboxysome shell protein CsoS1 from Prochlorococcus marinus (strain MIT 9313).